Consider the following 328-residue polypeptide: Cytochrome c biogenesis protein CcsA (328 aa).

Helical transmembrane passes span 13–33 (ISFS…LVNL), 46–66 (GIII…IFSG), 73–93 (LYES…VSYF), 101–121 (LNAI…SGLL), 146–166 (MILG…LLVI), 234–254 (IISL…VWAN), 263–283 (WDPK…YLHI), and 295–315 (AIVA…VNLL).

This sequence belongs to the CcmF/CycK/Ccl1/NrfE/CcsA family. As to quaternary structure, may interact with Ccs1.

It localises to the plastid. The protein resides in the chloroplast thylakoid membrane. Required during biogenesis of c-type cytochromes (cytochrome c6 and cytochrome f) at the step of heme attachment. This chain is Cytochrome c biogenesis protein CcsA, found in Olimarabidopsis pumila (Dwarf rocket).